A 654-amino-acid chain; its full sequence is Kelch-like protein 13 (654 aa).

The region spanning 91–160 (CDVTLMPGDT…IYTAKLSLNM (70 aa)) is the BTB domain. One can recognise a BACK domain in the interval 195-296 (CVEVGRIANT…TPQELINYVQ (102 aa)). Kelch repeat units follow at residues 340-388 (RLVT…VIGN), 389-440 (FLYV…ALKG), 441-487 (FLYA…VYGG), 489-534 (MYIS…TVGD), 536-586 (LYVI…VFEN), and 587-635 (KIYV…TLTV).

Component of the BCR(KLHL9-KLHL13) E3 ubiquitin ligase complex, at least composed of CUL3, KLHL9, KLHL13 and RBX1. Interacts with AURKB.

It participates in protein modification; protein ubiquitination. Substrate-specific adapter of a BCR (BTB-CUL3-RBX1) E3 ubiquitin-protein ligase complex required for mitotic progression and cytokinesis. The BCR(KLHL9-KLHL13) E3 ubiquitin ligase complex mediates the ubiquitination of AURKB and controls the dynamic behavior of AURKB on mitotic chromosomes and thereby coordinates faithful mitotic progression and completion of cytokinesis. In Mus musculus (Mouse), this protein is Kelch-like protein 13 (Klhl13).